The chain runs to 192 residues: ADP-ribose glycohydrolase AF_1521 (192 aa).

The region spanning 1–192 (MEVLFEAKVG…VALKVFERSL (192 aa)) is the Macro domain. Residues 19-21 (GDI), 32-34 (AAN), 39-44 (HGGGVA), and 140-146 (VSAGIYG) each bind substrate.

The catalysed reaction is 5-O-(ADP-D-ribosyl)-L-glutamyl-[protein] + H2O = L-glutamyl-[protein] + ADP-D-ribose + H(+). It catalyses the reaction 4-O-(ADP-D-ribosyl)-L-aspartyl-[protein] + H2O = L-aspartyl-[protein] + ADP-D-ribose + H(+). The enzyme catalyses alpha-NAD(+) + H2O = ADP-D-ribose + nicotinamide + H(+). In terms of biological role, removes ADP-ribose from aspartate and glutamate residues in proteins bearing a single ADP-ribose moiety. Inactive towards proteins bearing poly-ADP-ribose. Catalyzes removal of a phosphate group from ADP-ribose 1''-phosphate (Appr1p), but with low efficiency. The polypeptide is ADP-ribose glycohydrolase AF_1521 (Archaeoglobus fulgidus (strain ATCC 49558 / DSM 4304 / JCM 9628 / NBRC 100126 / VC-16)).